The following is a 156-amino-acid chain: Myosin, essential light chain, adductor muscle (156 aa).

EF-hand domains follow at residues 6–43 (DEID…LGIN) and 81–116 (GTFA…LGER).

Functionally, in molluscan muscle, calcium regulation is associated with myosin rather than with actin. Muscle myosin contains two types of light chains: the catalytic light chain, essential for ATPase activity, and the regulatory light chain, a calcium-binding protein responsible for Ca(2+) dependent binding and Ca(2+) dependent Mg-ATPase activity. This is Myosin, essential light chain, adductor muscle from Mizuhopecten yessoensis (Japanese scallop).